The sequence spans 93 residues: Small ribosomal subunit protein uS17 (93 aa).

Belongs to the universal ribosomal protein uS17 family. As to quaternary structure, part of the 30S ribosomal subunit.

Functionally, one of the primary rRNA binding proteins, it binds specifically to the 5'-end of 16S ribosomal RNA. This Corynebacterium aurimucosum (strain ATCC 700975 / DSM 44827 / CIP 107346 / CN-1) (Corynebacterium nigricans) protein is Small ribosomal subunit protein uS17.